Reading from the N-terminus, the 1378-residue chain is DNA-directed RNA polymerase subunit beta (1378 aa).

The protein belongs to the RNA polymerase beta chain family. In terms of assembly, the RNAP catalytic core consists of 2 alpha, 1 beta, 1 beta' and 1 omega subunit. When a sigma factor is associated with the core the holoenzyme is formed, which can initiate transcription.

It carries out the reaction RNA(n) + a ribonucleoside 5'-triphosphate = RNA(n+1) + diphosphate. Functionally, DNA-dependent RNA polymerase catalyzes the transcription of DNA into RNA using the four ribonucleoside triphosphates as substrates. The chain is DNA-directed RNA polymerase subunit beta from Roseobacter denitrificans (strain ATCC 33942 / OCh 114) (Erythrobacter sp. (strain OCh 114)).